Reading from the N-terminus, the 118-residue chain is Putative pterin-4-alpha-carbinolamine dehydratase (118 aa).

Belongs to the pterin-4-alpha-carbinolamine dehydratase family.

The enzyme catalyses (4aS,6R)-4a-hydroxy-L-erythro-5,6,7,8-tetrahydrobiopterin = (6R)-L-erythro-6,7-dihydrobiopterin + H2O. The sequence is that of Putative pterin-4-alpha-carbinolamine dehydratase from Pseudomonas putida (strain ATCC 700007 / DSM 6899 / JCM 31910 / BCRC 17059 / LMG 24140 / F1).